Here is a 393-residue protein sequence, read N- to C-terminus: Beta-ureidopropionase (393 aa).

The 273-residue stretch at 72–344 (VRVGLVQNRI…DGLLVTELNL (273 aa)) folds into the CN hydrolase domain. E119 (proton acceptor) is an active-site residue. K196 (proton donor) is an active-site residue. Residue C233 is the Nucleophile of the active site. S378 carries the post-translational modification Phosphoserine.

This sequence belongs to the carbon-nitrogen hydrolase superfamily. BUP family. As to quaternary structure, homodimer, homotetramer, homooctamer; can also form higher homooligomers. Post-translationally, the N-terminus is blocked. In terms of tissue distribution, detected in liver (at protein level).

The protein localises to the cytoplasm. The enzyme catalyses 3-(carbamoylamino)propanoate + H2O + 2 H(+) = beta-alanine + NH4(+) + CO2. It carries out the reaction 3-(carbamoylamino)-2-methylpropanoate + H2O + 2 H(+) = (R)-3-amino-2-methylpropanoate + NH4(+) + CO2. Its pathway is amino-acid biosynthesis; beta-alanine biosynthesis. Its activity is regulated as follows. Allosteric enzyme with positive cooperativity toward the substrate N-carbamoyl-beta-alanine at low substrate concentrations (below 12 nM). Displays no cooperativity at substrate levels above 12 nM. In terms of biological role, catalyzes a late step in pyrimidine degradation. Converts N-carbamoyl-beta-alanine (3-ureidopropanoate) into beta-alanine, ammonia and carbon dioxide. Likewise, converts N-carbamoyl-beta-aminoisobutyrate (3-ureidoisobutyrate) into beta-aminoisobutyrate, ammonia and carbon dioxide. In Rattus norvegicus (Rat), this protein is Beta-ureidopropionase (Upb1).